We begin with the raw amino-acid sequence, 274 residues long: Diaminopimelate epimerase (274 aa).

Asn11, Gln44, and Asn64 together coordinate substrate. Catalysis depends on Cys73, which acts as the Proton donor. Substrate is bound by residues 74-75 (GN), Asn157, Asn190, and 208-209 (ER). Residue Cys217 is the Proton acceptor of the active site. Substrate is bound at residue 218–219 (GS).

This sequence belongs to the diaminopimelate epimerase family. In terms of assembly, homodimer.

The protein resides in the cytoplasm. The enzyme catalyses (2S,6S)-2,6-diaminopimelate = meso-2,6-diaminopimelate. The protein operates within amino-acid biosynthesis; L-lysine biosynthesis via DAP pathway; DL-2,6-diaminopimelate from LL-2,6-diaminopimelate: step 1/1. Functionally, catalyzes the stereoinversion of LL-2,6-diaminopimelate (L,L-DAP) to meso-diaminopimelate (meso-DAP), a precursor of L-lysine and an essential component of the bacterial peptidoglycan. The polypeptide is Diaminopimelate epimerase (Actinobacillus pleuropneumoniae serotype 3 (strain JL03)).